We begin with the raw amino-acid sequence, 226 residues long: Lipoprotein-releasing system ATP-binding protein LolD (226 aa).

The region spanning 6-226 (IELKSVERHY…TLADGKVVPL (221 aa)) is the ABC transporter domain. Residue 42–49 (APSGTGKS) participates in ATP binding.

This sequence belongs to the ABC transporter superfamily. Lipoprotein translocase (TC 3.A.1.125) family. In terms of assembly, the complex is composed of two ATP-binding proteins (LolD) and two transmembrane proteins (LolC and LolE).

The protein localises to the cell inner membrane. Part of the ABC transporter complex LolCDE involved in the translocation of mature outer membrane-directed lipoproteins, from the inner membrane to the periplasmic chaperone, LolA. Responsible for the formation of the LolA-lipoprotein complex in an ATP-dependent manner. This Mesorhizobium japonicum (strain LMG 29417 / CECT 9101 / MAFF 303099) (Mesorhizobium loti (strain MAFF 303099)) protein is Lipoprotein-releasing system ATP-binding protein LolD.